A 633-amino-acid chain; its full sequence is DNA-directed RNA polymerase subunit gamma (633 aa).

Zn(2+) contacts are provided by C74, C76, C89, and C92. Residues D471, D473, and D475 each coordinate Mg(2+).

Belongs to the RNA polymerase beta' chain family. RpoC1 subfamily. As to quaternary structure, in cyanobacteria the RNAP catalytic core is composed of 2 alpha, 1 beta, 1 beta', 1 gamma and 1 omega subunit. When a sigma factor is associated with the core the holoenzyme is formed, which can initiate transcription. Mg(2+) serves as cofactor. The cofactor is Zn(2+).

It carries out the reaction RNA(n) + a ribonucleoside 5'-triphosphate = RNA(n+1) + diphosphate. In terms of biological role, DNA-dependent RNA polymerase catalyzes the transcription of DNA into RNA using the four ribonucleoside triphosphates as substrates. The chain is DNA-directed RNA polymerase subunit gamma from Prochlorococcus marinus (strain MIT 9211).